The following is a 256-amino-acid chain: 5-keto-4-deoxy-D-glucarate aldolase (256 aa).

The active-site Proton acceptor is the His50. Gln151 serves as a coordination point for substrate. Glu153 provides a ligand contact to Mg(2+). 2 residues coordinate substrate: Ser178 and Asp179. Residue Asp179 coordinates Mg(2+).

The protein belongs to the HpcH/HpaI aldolase family. KDGluc aldolase subfamily. In terms of assembly, homohexamer; trimer of dimers. It depends on Mg(2+) as a cofactor.

The catalysed reaction is 5-dehydro-4-deoxy-D-glucarate = 2-hydroxy-3-oxopropanoate + pyruvate. It carries out the reaction 2-dehydro-3-deoxy-D-glucarate = 2-hydroxy-3-oxopropanoate + pyruvate. Its pathway is carbohydrate acid metabolism; galactarate degradation; D-glycerate from galactarate: step 2/3. Its function is as follows. Catalyzes the reversible retro-aldol cleavage of both 5-keto-4-deoxy-D-glucarate and 2-keto-3-deoxy-D-glucarate to pyruvate and tartronic semialdehyde. The chain is 5-keto-4-deoxy-D-glucarate aldolase from Enterobacter sp. (strain 638).